Here is a 55-residue protein sequence, read N- to C-terminus: Large ribosomal subunit protein bL33 (55 aa).

A compositionally biased stretch (basic and acidic residues) spans 1-11; it reads MAKGSREKIKL. Positions 1–32 are disordered; the sequence is MAKGSREKIKLESSASTGHFYTTSKNKRTKPE. Residues 13–24 show a composition bias toward polar residues; that stretch reads SSASTGHFYTTS.

It belongs to the bacterial ribosomal protein bL33 family.

This chain is Large ribosomal subunit protein bL33, found in Polynucleobacter necessarius subsp. necessarius (strain STIR1).